The chain runs to 206 residues: Sclerostin domain-containing protein 1 (206 aa).

The signal sequence occupies residues 1 to 23 (MLPPAIHFYLLPLACILMKSCLA). Asn-47 is a glycosylation site (N-linked (GlcNAc...) asparagine). 4 disulfide bridges follow: Cys-75-Cys-133, Cys-89-Cys-147, Cys-100-Cys-163, and Cys-104-Cys-165. The CTCK domain maps to 75-170 (CRELRSTKYI…TACKCKRYTR (96 aa)). A glycan (N-linked (GlcNAc...) asparagine) is linked at Asn-173. The segment at 174–206 (ESSHNFESMSPAKPVQHHRERKRASKSSKHSMS) is disordered. Positions 188–206 (VQHHRERKRASKSSKHSMS) are enriched in basic residues.

It belongs to the sclerostin family. As to quaternary structure, interacts with BMP2, BMP4, BMP6 and BMP7 with high affinity. As to expression, highly expressed in kidney and weakly in lung.

Its subcellular location is the secreted. Its function is as follows. May be involved in the onset of endometrial receptivity for implantation/sensitization for the decidual cell reaction Enhances Wnt signaling and inhibits TGF-beta signaling. Directly antagonizes activity of BMP2, BMP4, BMP6 and BMP7 in a dose-dependent manner. In Homo sapiens (Human), this protein is Sclerostin domain-containing protein 1 (SOSTDC1).